The sequence spans 385 residues: Palmitoyl-[acyl-carrier-protein] 4-desaturase, chloroplastic (385 aa).

The transit peptide at 1–36 (MAMKLNALMTLQCPKRNMFTRIAPPQAGRVRSKVSM) directs the protein to the chloroplast. The Fe cation site is built by glutamate 126, glutamate 164, histidine 167, glutamate 217, glutamate 250, and histidine 253.

This sequence belongs to the fatty acid desaturase type 2 family. As to quaternary structure, homodimer. Fe(2+) is required as a cofactor. As to expression, found only in tissues which synthesize petroselinic acid, such as developing seeds.

The protein localises to the plastid. The protein resides in the chloroplast. It catalyses the reaction hexadecanoyl-[ACP] + 2 reduced [2Fe-2S]-[ferredoxin] + O2 + 2 H(+) = (4Z)-hexadecenoyl-[ACP] + 2 oxidized [2Fe-2S]-[ferredoxin] + 2 H2O. Functionally, converts palmitoyl-ACP to (4Z)-hexadec-4-enoyl-ACP by introduction of a cis double bond between carbons 4 and 5 of the acyl chain. This is Palmitoyl-[acyl-carrier-protein] 4-desaturase, chloroplastic from Coriandrum sativum (Coriander).